The sequence spans 507 residues: Aldehyde dehydrogenase 1, mitochondrial (507 aa).

Residues 1-21 (MLATRNLVPIIRASIKWRIKL) constitute a mitochondrion transit peptide. 266 to 271 (GSTLVG) is an NAD(+) binding site. Catalysis depends on residues glutamate 289 and cysteine 323.

Belongs to the aldehyde dehydrogenase family. As to quaternary structure, homotetramer.

Its subcellular location is the mitochondrion matrix. It carries out the reaction an aldehyde + NAD(+) + H2O = a carboxylate + NADH + 2 H(+). Its pathway is alcohol metabolism; ethanol degradation; acetate from ethanol: step 2/2. The polypeptide is Aldehyde dehydrogenase 1, mitochondrial (ALD1) (Saccharomyces cerevisiae (Baker's yeast)).